The sequence spans 121 residues: Large ribosomal subunit protein uL18 (121 aa).

The protein belongs to the universal ribosomal protein uL18 family. As to quaternary structure, part of the 50S ribosomal subunit; part of the 5S rRNA/L5/L18/L25 subcomplex. Contacts the 5S and 23S rRNAs.

In terms of biological role, this is one of the proteins that bind and probably mediate the attachment of the 5S RNA into the large ribosomal subunit, where it forms part of the central protuberance. The chain is Large ribosomal subunit protein uL18 from Moorella thermoacetica (strain ATCC 39073 / JCM 9320).